The following is a 335-amino-acid chain: Phosphatidylcholine:ceramide cholinephosphotransferase 2 (335 aa).

5 helical membrane passes run 60–80 (LTAF…LTVI), 104–124 (WSVG…IIFL), 136–156 (FLLG…TFLP), 200–220 (ILCG…MYFV), and 229–249 (LVIL…ALVV). H210 is an active-site residue. Residues H253 and D257 contribute to the active site. A helical membrane pass occupies residues 258–278 (VLIAYWLTSHVFWSYHQIFEM). The Cytoplasmic segment spans residues 279 to 335 (RKDDRPQAPLSRLWWFWLCYWFESDVADGKLVNKWNWPLEGPQRMHTIMNRINYKLQ).

This sequence belongs to the sphingomyelin synthase family.

The protein localises to the membrane. It carries out the reaction an N-acylsphing-4-enine + a 1,2-diacyl-sn-glycero-3-phosphocholine = a sphingomyelin + a 1,2-diacyl-sn-glycerol. It catalyses the reaction an N-acyl-15-methylhexadecasphing-4-enine + a 1,2-diacyl-sn-glycero-3-phosphocholine = an N-acyl-15-methylhexadecasphing-4-enine-1-phosphocholine + a 1,2-diacyl-sn-glycerol. It functions in the pathway lipid metabolism; sphingolipid metabolism. Functionally, sphingomyelin synthases (SM synthase or SMS) synthesize the sphingolipid sphingomyelin (SM) through transfer of the phosphatidyl head group of 1,2-diacyl-sn-glycero-3-phosphocholine (phosphatidylcholine, PC) on to the primary hydroxyl of ceramide (N-acylsphingoid base), yielding 1,2-diacyl-sn-glycerol (diacylglycerol, DAG) as a side product. Functions as a bidirectional lipid cholinephosphotransferases capable of converting PC and ceramide to SM and DAG and vice versa depending on the respective levels of ceramide and DAG as phosphocholine acceptors, respectively. This is Phosphatidylcholine:ceramide cholinephosphotransferase 2 (sms-2) from Caenorhabditis elegans.